Reading from the N-terminus, the 151-residue chain is FUN14 domain-containing protein 1A (151 aa).

A YXXL motif is present at residues 14–17 (YEVL). 3 consecutive transmembrane segments (helical) span residues 44–64 (YSVA…GFLF), 71–91 (AATA…GGYI), and 130–150 (FVKK…LGLA).

Belongs to the FUN14 family.

It is found in the mitochondrion outer membrane. Functionally, acts as an activator of hypoxia-induced mitophagy, an important mechanism for mitochondrial quality control. This chain is FUN14 domain-containing protein 1A (fundc1-a), found in Xenopus laevis (African clawed frog).